We begin with the raw amino-acid sequence, 721 residues long: Polyribonucleotide nucleotidyltransferase (721 aa).

Residues D495 and D501 each coordinate Mg(2+). In terms of domain architecture, KH spans 562 to 621 (PRLLSFRIDPELIGTVIGPGGRTIKGITERTNTKIDIEDGGIVTIASHDGAAAEAAQRII). Residues 631 to 699 (GEVFSGTITR…NRGRINLTLR (69 aa)) enclose the S1 motif domain. Residues 700–721 (GVPQNGEETQSEPAPTPVAPLN) are disordered.

The protein belongs to the polyribonucleotide nucleotidyltransferase family. The cofactor is Mg(2+).

The protein resides in the cytoplasm. It carries out the reaction RNA(n+1) + phosphate = RNA(n) + a ribonucleoside 5'-diphosphate. Its function is as follows. Involved in mRNA degradation. Catalyzes the phosphorolysis of single-stranded polyribonucleotides processively in the 3'- to 5'-direction. This chain is Polyribonucleotide nucleotidyltransferase, found in Prochlorococcus marinus (strain MIT 9303).